Consider the following 86-residue polypeptide: MNFQPLGKRVLVKRVEETKTTASGIIIPDNAKEKPLMGEVVAVSKEITDIANGDKIMFAKYGGTEIKLDNNEYLVLNLDDILGILK.

Belongs to the GroES chaperonin family. In terms of assembly, heptamer of 7 subunits arranged in a ring. Interacts with the chaperonin GroEL.

Its subcellular location is the cytoplasm. Together with the chaperonin GroEL, plays an essential role in assisting protein folding. The GroEL-GroES system forms a nano-cage that allows encapsulation of the non-native substrate proteins and provides a physical environment optimized to promote and accelerate protein folding. GroES binds to the apical surface of the GroEL ring, thereby capping the opening of the GroEL channel. The chain is Co-chaperonin GroES from Campylobacter jejuni subsp. doylei (strain ATCC BAA-1458 / RM4099 / 269.97).